The primary structure comprises 1745 residues: DNA-directed RNA polymerase II subunit RPB1 (1745 aa).

8 residues coordinate Zn(2+): Cys-67, Cys-70, Cys-77, His-80, Cys-107, Cys-110, Cys-148, and Cys-167. 3 residues coordinate Mg(2+): Asp-481, Asp-483, and Asp-485. The segment at 810–822 (PQEFFFHAMGGRE) is bridging helix. Lys-1247 participates in a covalent cross-link: Glycyl lysine isopeptide (Lys-Gly) (interchain with G-Cter in ubiquitin). The segment at 1530–1745 (NGPTSPGFGD…KEQKDENGTH (216 aa)) is disordered. Positions 1546–1730 (SPTSPAYSPT…SPRSPSYSPS (185 aa)) are enriched in low complexity. Tandem repeats lie at residues 1552-1558 (YSPTSPS), 1559-1565 (YSPTSPS), 1566-1572 (YSPTSPS), 1573-1579 (YSPTSPS), 1580-1586 (YSPTSPS), 1587-1593 (YSPTSPS), 1594-1600 (YSPTSPS), 1601-1607 (YSPTSPS), 1608-1614 (YSPTSPS), 1615-1621 (YSPTSPS), 1622-1628 (YSPTSPS), 1629-1635 (YSPTSPS), 1636-1642 (YSPTSPS), 1643-1649 (YSPTSPS), 1650-1656 (YSPTSPS), 1657-1663 (YSPTSPS), 1664-1670 (YSPTSPS), 1671-1677 (YSPTSPS), 1678-1684 (YSPTSPS), 1685-1691 (YSPTSPS), 1692-1698 (YSPTSPS), 1699-1705 (YSPTSPS), 1706-1712 (YSPTSPS), and 1713-1719 (YSPTSPQ). The segment at 1552-1726 (YSPTSPSYSP…SPQYSPRSPS (175 aa)) is C-terminal domain (CTD); 25 X 7 AA approximate tandem repeats of Y-S-P-T-S-P-[TSAN]. Residues 1720 to 1726 (YSPRSPS) form a 25; approximate repeat. Residues 1734-1745 (NDKEQKDENGTH) show a composition bias toward basic and acidic residues.

Belongs to the RNA polymerase beta' chain family. In terms of assembly, component of the RNA polymerase II (Pol II) complex consisting of 12 subunits. In terms of processing, the tandem 7 residues repeats in the C-terminal domain (CTD) can be highly phosphorylated. The phosphorylation activates Pol II. Phosphorylation occurs mainly at residues 'Ser-2' and 'Ser-5' of the heptapeptide repeat. The phosphorylation state is believed to result from the balanced action of site-specific CTD kinases and phosphatase, and a 'CTD code' that specifies the position of Pol II within the transcription cycle has been proposed. Following transcription stress, the elongating form of RNA polymerase II (RNA pol IIo) is polyubiquitinated via 'Lys-63'-linkages on Lys-1247 at DNA damage sites without leading to degradation: ubiquitination promotes RNA pol IIo backtracking to allow access by the transcription-coupled nucleotide excision repair (TC-NER) machinery. Subsequent DEF1-dependent polyubiquitination by the elongin complex via 'Lys-48'-linkages may lead to proteasome-mediated degradation; presumably at stalled RNA pol II where TC-NER has failed, to halt global transcription and enable 'last resort' DNA repair pathways.

The protein localises to the nucleus. It carries out the reaction RNA(n) + a ribonucleoside 5'-triphosphate = RNA(n+1) + diphosphate. DNA-dependent RNA polymerase catalyzes the transcription of DNA into RNA using the four ribonucleoside triphosphates as substrates. Largest and catalytic component of RNA polymerase II which synthesizes mRNA precursors and many functional non-coding RNAs. Forms the polymerase active center together with the second largest subunit. Pol II is the central component of the basal RNA polymerase II transcription machinery. It is composed of mobile elements that move relative to each other. RPB1 is part of the core element with the central large cleft, the clamp element that moves to open and close the cleft and the jaws that are thought to grab the incoming DNA template. At the start of transcription, a single-stranded DNA template strand of the promoter is positioned within the central active site cleft of Pol II. A bridging helix emanates from RPB1 and crosses the cleft near the catalytic site and is thought to promote translocation of Pol II by acting as a ratchet that moves the RNA-DNA hybrid through the active site by switching from straight to bent conformations at each step of nucleotide addition. During transcription elongation, Pol II moves on the template as the transcript elongates. Elongation is influenced by the phosphorylation status of the C-terminal domain (CTD) of Pol II largest subunit (RPB1), which serves as a platform for assembly of factors that regulate transcription initiation, elongation, termination and mRNA processing. This Eremothecium gossypii (strain ATCC 10895 / CBS 109.51 / FGSC 9923 / NRRL Y-1056) (Yeast) protein is DNA-directed RNA polymerase II subunit RPB1 (RPB1).